A 232-amino-acid chain; its full sequence is Phosphatidylserine decarboxylase proenzyme (232 aa).

Serine 190 (schiff-base intermediate with substrate; via pyruvic acid) is an active-site residue. Serine 190 is modified (pyruvic acid (Ser); by autocatalysis).

The protein belongs to the phosphatidylserine decarboxylase family. PSD-A subfamily. As to quaternary structure, heterodimer of a large membrane-associated beta subunit and a small pyruvoyl-containing alpha subunit. The cofactor is pyruvate. Post-translationally, is synthesized initially as an inactive proenzyme. Formation of the active enzyme involves a self-maturation process in which the active site pyruvoyl group is generated from an internal serine residue via an autocatalytic post-translational modification. Two non-identical subunits are generated from the proenzyme in this reaction, and the pyruvate is formed at the N-terminus of the alpha chain, which is derived from the carboxyl end of the proenzyme. The post-translation cleavage follows an unusual pathway, termed non-hydrolytic serinolysis, in which the side chain hydroxyl group of the serine supplies its oxygen atom to form the C-terminus of the beta chain, while the remainder of the serine residue undergoes an oxidative deamination to produce ammonia and the pyruvoyl prosthetic group on the alpha chain.

Its subcellular location is the cell membrane. It carries out the reaction a 1,2-diacyl-sn-glycero-3-phospho-L-serine + H(+) = a 1,2-diacyl-sn-glycero-3-phosphoethanolamine + CO2. Its pathway is phospholipid metabolism; phosphatidylethanolamine biosynthesis; phosphatidylethanolamine from CDP-diacylglycerol: step 2/2. Its function is as follows. Catalyzes the formation of phosphatidylethanolamine (PtdEtn) from phosphatidylserine (PtdSer). This is Phosphatidylserine decarboxylase proenzyme from Bartonella henselae (strain ATCC 49882 / DSM 28221 / CCUG 30454 / Houston 1) (Rochalimaea henselae).